The following is a 689-amino-acid chain: Glycine--tRNA ligase beta subunit (689 aa).

This sequence belongs to the class-II aminoacyl-tRNA synthetase family. In terms of assembly, tetramer of two alpha and two beta subunits.

The protein localises to the cytoplasm. The enzyme catalyses tRNA(Gly) + glycine + ATP = glycyl-tRNA(Gly) + AMP + diphosphate. The sequence is that of Glycine--tRNA ligase beta subunit from Cronobacter sakazakii (strain ATCC BAA-894) (Enterobacter sakazakii).